A 312-amino-acid polypeptide reads, in one-letter code: Large ribosomal subunit protein uL15m (312 aa).

The segment at 63–89 (RIRKGRGPSSGYGKTAGRGTKGQKAHG) is disordered. The span at 70-82 (PSSGYGKTAGRGT) shows a compositional bias: gly residues.

This sequence belongs to the universal ribosomal protein uL15 family. In terms of assembly, component of the mitochondrial large ribosomal subunit (mt-LSU). Mature N.crassa 74S mitochondrial ribosomes consist of a small (37S) and a large (54S) subunit. The 37S small subunit contains a 16S ribosomal RNA (16S mt-rRNA) and 32 different proteins. The 54S large subunit contains a 23S rRNA (23S mt-rRNA) and 42 different proteins.

The protein localises to the mitochondrion. Functionally, component of the mitochondrial ribosome (mitoribosome), a dedicated translation machinery responsible for the synthesis of mitochondrial genome-encoded proteins, including at least some of the essential transmembrane subunits of the mitochondrial respiratory chain. The mitoribosomes are attached to the mitochondrial inner membrane and translation products are cotranslationally integrated into the membrane. The protein is Large ribosomal subunit protein uL15m (mrpl10) of Neurospora crassa (strain ATCC 24698 / 74-OR23-1A / CBS 708.71 / DSM 1257 / FGSC 987).